The primary structure comprises 141 residues: MTAGPHRVVVLVFDGMKLLDLSGPAEVFSEANRFGADYRLSIVSADGSPVRSSIGMLVPADTDARAAAAHDTLVVVGGDALPGSPVGPVLGAAAKELAERAGRVASVCTGAFVLGAAGLLEGRRATTHWQHTATLARRCPS.

It belongs to the peptidase C56 family.

This is an uncharacterized protein from Streptomyces lividans.